The chain runs to 1235 residues: Phosphorylase b kinase regulatory subunit alpha, liver isoform (1235 aa).

A phosphoserine mark is found at Ser697, Ser731, and Ser737. Positions 808 to 838 (LSELYGKAGLNQEWGLIRYISGLLRKKVEVL) are calmodulin-binding. The span at 976–986 (SSASSPAISIH) shows a compositional bias: low complexity. Residues 976–1002 (SSASSPAISIHEVGHTGVTKTERSGIN) form a disordered region. Residues Ser984, Ser1016, and Ser1044 each carry the phosphoserine modification. Residues 1032–1053 (AYSKSVRSSTPSSPTGTSSSDS) show a composition bias toward low complexity. Residues 1032 to 1060 (AYSKSVRSSTPSSPTGTSSSDSGGHHISW) form a disordered region. Residues 1059-1099 (SWGERQGQWLRRRRLDGAINRVPVGFYQRVWKILQKCHGLS) are calmodulin-binding. The S-farnesyl cysteine moiety is linked to residue Cys1232.

The protein belongs to the phosphorylase b kinase regulatory chain family. Hexadecamer of 4 heterotetramers, each composed of alpha, beta, gamma, and delta subunits. Alpha (PHKA1 or PHKA2) and beta (PHKB) are regulatory subunits, gamma (PHKG1 or PHKG2) is the catalytic subunit, and delta is calmodulin. Post-translationally, although the final Cys may be farnesylated, the terminal tripeptide is probably not removed, and the C-terminus is not methylated. As to expression, predominantly expressed in liver and other non-muscle tissues.

It localises to the cell membrane. The protein operates within glycan biosynthesis; glycogen metabolism. By phosphorylation of various serine residues and by calcium. Functionally, phosphorylase b kinase catalyzes the phosphorylation of serine in certain substrates, including troponin I. The alpha chain may bind calmodulin. In Oryctolagus cuniculus (Rabbit), this protein is Phosphorylase b kinase regulatory subunit alpha, liver isoform (PHKA2).